The chain runs to 635 residues: Sodium- and chloride-dependent transporter XTRP3B (635 aa).

The tract at residues 1-38 (MESPSAHAVSLPEDEELQPWGGAGGPGQHPGRPRSTEC) is disordered. At 1-56 (MESPSAHAVSLPEDEELQPWGGAGGPGQHPGRPRSTECAHPGVVEKVRPKWDNPLQ) the chain is on the cytoplasmic side. A helical transmembrane segment spans residues 57–77 (FLLVCISYAVGLGNVWRFPYL). Topologically, residues 78–85 (CQMYGGGN) are extracellular. A helical membrane pass occupies residues 86–106 (FLVPYIIMLIVEGMPLLYLEL). Residues 107 to 127 (AVGQRMRQGSIGAWRTISPYL) are Cytoplasmic-facing. Residues 128–148 (SGVGIASLVVSFLASVYFNVI) form a helical membrane-spanning segment. Residues 149 to 208 (NTWALWYLFHSFQDPLPWSVCPLNSNHTGYDEECEKASSTQYFWYRKTLNISPSIQENGG) lie on the Extracellular side of the membrane. An N-linked (GlcNAc...) asparagine glycan is attached at Asn-174. The helical transmembrane segment at 209–229 (VQWEPALCLTLAWLMVYLCIL) threads the bilayer. Topologically, residues 230–237 (RGTESTGK) are cytoplasmic. A helical transmembrane segment spans residues 238–258 (VVYFTTSLPYFVLIIYLVRGL). The Extracellular portion of the chain corresponds to 259–284 (TLHGATNGLAYMFTPKIEQLANPKAW). A helical transmembrane segment spans residues 285-305 (INAATQIFFSLGLGCGGLIAF). The Cytoplasmic portion of the chain corresponds to 306–319 (ASYNEPSNDCQKHA). A helical membrane pass occupies residues 320–340 (LIVSVINSTTAIFSSIVTFSI). Over 341–432 (YGFKATFNYE…EAIKNMEVSQ (92 aa)) the chain is Extracellular. The N-linked (GlcNAc...) asparagine glycan is linked to Asn-400. The chain crosses the membrane as a helical span at residues 433 to 453 (LWSVLYFFMLLTLGMGSMVGT). Over 454-474 (GTAILTPLTDSKIISSYLPKE) the chain is Cytoplasmic. A helical membrane pass occupies residues 475–495 (AISGLVCLLNCAIGMVFTMEA). At 496-508 (GNYWFDLFNDYTA) the chain is on the extracellular side. A helical transmembrane segment spans residues 509 to 529 (TLSLLLIVLVETIAVCYVYGL). The Cytoplasmic portion of the chain corresponds to 530-547 (KRFESDLRAMTGRTLSWY). Residues 548-568 (WKVMWAFVSPLLIVGLFIFYL) form a helical membrane-spanning segment. Residues 569 to 597 (SDYILTGTLQYQAWDATQGHVVTKDYPTY) lie on the Extracellular side of the membrane. Residues 598 to 618 (ALAVIGLLVASSTMCIPLVAL) form a helical membrane-spanning segment. The Cytoplasmic segment spans residues 619 to 635 (GTFVTRHFKIREQFSAA).

Belongs to the sodium:neurotransmitter symporter (SNF) (TC 2.A.22) family. SLC6A20 subfamily. In terms of assembly, interacts with CLTRN. As to expression, detected only in kidney and lung.

The protein localises to the apical cell membrane. Functionally, does not show transporter activity with a range of tested amino acids including proline, glutamine, glutamic acid, leucine, alanine, histidine, glycine and arginine. The protein is Sodium- and chloride-dependent transporter XTRP3B (Slc6a20b) of Mus musculus (Mouse).